The primary structure comprises 313 residues: MWWVRRTRYWFSTLLYAGGARLRPGRRTASGGLETPGSCGAELQGELDRFGGVSVHLSRHHTLHGLDAAAFRRLLQAAIQQWRSDGRIAAWLHIPILQSHFIAPAASLGFCFHHAKPHSSTLTLWLGEGPSRLPGYATHQVGVAGAVFDVSTRKVLVVQDRNKLKNMWKFPGGLSEPGEDIADTAVREVFEETGVKSEFRSLLSIRQQHRSPGAFGMSDMYLVCRLQPRSFTINFCQQECLKCEWIDLENLARTKHTTPITSRVARLLLYGLREGFDKIDLSMEELPAVYTGLFYKLYHRELPESYKAATGAD.

A Nudix hydrolase domain is found at 138–270 (THQVGVAGAV…TSRVARLLLY (133 aa)).

Belongs to the Nudix hydrolase family. As to quaternary structure, monomer and homodimer.

The protein resides in the cytoplasm. The protein localises to the nucleus. Its subcellular location is the mitochondrion. Functionally, may contribute to the regulation of cell proliferation. This Mus musculus (Mouse) protein is Nucleoside diphosphate-linked moiety X motif 6 (Nudt6).